The primary structure comprises 198 residues: Recombination protein RecR (198 aa).

Residues 57 to 72 (CSVCHNITDTDPCRIC) form a C4-type zinc finger. Residues 80-175 (SVICVVQDAK…KVTRIAHGLP (96 aa)) enclose the Toprim domain.

Belongs to the RecR family.

Functionally, may play a role in DNA repair. It seems to be involved in an RecBC-independent recombinational process of DNA repair. It may act with RecF and RecO. This chain is Recombination protein RecR, found in Halalkalibacterium halodurans (strain ATCC BAA-125 / DSM 18197 / FERM 7344 / JCM 9153 / C-125) (Bacillus halodurans).